A 635-amino-acid chain; its full sequence is S-type anion channel SLAH3 (635 aa).

Topologically, residues 1–253 (MEEKPNYVIQ…IVLPNDKKWP (253 aa)) are cytoplasmic. Residues 102–121 (SDPTTSLSSENHKNSGSTGK) are compositionally biased toward polar residues. The segment at 102-173 (SDPTTSLSSE…SGHHQNQNQA (72 aa)) is disordered. Over residues 153–165 (NHHHHLHRQHQSG) the composition is skewed to basic residues. The residue at position 189 (serine 189) is a Phosphoserine. The tract at residues 193–217 (ERQFTRKPASVEPEAPNRNNQNLNT) is disordered. Residues 254-276 (FLLRYPISTFGMCLGVSSQAIMW) form a helical membrane-spanning segment. Over 277–299 (KTLATAEPTKFLHVPLWINQGLW) the chain is Extracellular. A helical transmembrane segment spans residues 300–320 (FISVALILTIATIYLLKIILF). The Cytoplasmic segment spans residues 321-335 (FEAVRREYYHPIRIN). Residues 336-356 (FFFAPFISLLFLALGVPPSII) form a helical membrane-spanning segment. Topologically, residues 357-358 (TD) are extracellular. The helical transmembrane segment at 359–379 (LPHFLWYLLMFPFICLELKIY) threads the bilayer. Topologically, residues 380 to 396 (GQWMSGGQRRLSRVANP) are cytoplasmic. The helical transmembrane segment at 397 to 417 (TNHLSVVGNFVGALLGASMGL) threads the bilayer. Residues 418-419 (RE) are Extracellular-facing. The helical transmembrane segment at 420–440 (GPIFFYAVGMAHYLVLFVTLY) threads the bilayer. At 441-455 (QRLPTNETLPKDLHP) the chain is on the cytoplasmic side. The chain crosses the membrane as a helical span at residues 456 to 476 (VFFLFVAAPSVASMAWAKVTG). Serine 477 is a topological domain (extracellular). The chain crosses the membrane as a helical span at residues 478–498 (FDYGSKVCYFIAIFLYFSLAV). Residues 499–504 (RINFFR) are Cytoplasmic-facing. Residues 505–525 (GIKFSLSWWAYTFPMTGAAIA) traverse the membrane as a helical segment. The Extracellular portion of the chain corresponds to 526 to 541 (TIRYATVVKSTMTQIM). The helical transmembrane segment at 542–562 (CVVLCAIATLVVFALLVTTII) threads the bilayer. The Cytoplasmic segment spans residues 563–635 (HAFVLRDLFP…NGKTQESDSS (73 aa)). Residues 611–635 (FTDSDSSQSNDVEACNGKTQESDSS) form a disordered region. A compositionally biased stretch (polar residues) spans 614–635 (SDSSQSNDVEACNGKTQESDSS).

It belongs to the SLAC1 S-type anion channel family. Homotrimer. Interacts with KAT1. As to expression, expressed in the whole plant, escpecially in vascular systems.

Its subcellular location is the cell membrane. In terms of biological role, slow, weak voltage-dependent S-type anion efflux channel involved in maintenance of anion homeostasis. Binds to the highly selective inward-rectifying potassium channel KAT1 and inhibits its activity. Functions as an essential negative regulator of inward potassium channels in guard cells. Essential for the efficient stomatal closure and opening in guard cells. This Arabidopsis thaliana (Mouse-ear cress) protein is S-type anion channel SLAH3 (SLAH3).